A 406-amino-acid chain; its full sequence is Imidazolonepropionase (406 aa).

Residues H74 and H76 each contribute to the Fe(3+) site. Zn(2+)-binding residues include H74 and H76. R83, Y146, and H179 together coordinate 4-imidazolone-5-propanoate. N-formimidoyl-L-glutamate is bound at residue Y146. H240 is a Fe(3+) binding site. Position 240 (H240) interacts with Zn(2+). E243 lines the 4-imidazolone-5-propanoate pocket. D314 contacts Fe(3+). D314 is a binding site for Zn(2+). The N-formimidoyl-L-glutamate site is built by N316 and G318. 4-imidazolone-5-propanoate is bound at residue S319.

The protein belongs to the metallo-dependent hydrolases superfamily. HutI family. Zn(2+) serves as cofactor. Requires Fe(3+) as cofactor.

It is found in the cytoplasm. It catalyses the reaction 4-imidazolone-5-propanoate + H2O = N-formimidoyl-L-glutamate. It participates in amino-acid degradation; L-histidine degradation into L-glutamate; N-formimidoyl-L-glutamate from L-histidine: step 3/3. Its function is as follows. Catalyzes the hydrolytic cleavage of the carbon-nitrogen bond in imidazolone-5-propanoate to yield N-formimidoyl-L-glutamate. It is the third step in the universal histidine degradation pathway. The protein is Imidazolonepropionase of Kosmotoga olearia (strain ATCC BAA-1733 / DSM 21960 / TBF 19.5.1).